A 332-amino-acid polypeptide reads, in one-letter code: Arabinogalactan endo-beta-1,4-galactanase (332 aa).

N-linked (GlcNAc...) asparagine glycosylation is present at N111. The Proton donor role is filled by E135. Residue E245 is the Nucleophile of the active site.

This sequence belongs to the glycosyl hydrolase 53 family.

The catalysed reaction is The enzyme specifically hydrolyzes (1-&gt;4)-beta-D-galactosidic linkages in type I arabinogalactans.. The sequence is that of Arabinogalactan endo-beta-1,4-galactanase from Thermothelomyces thermophilus (Myceliophthora thermophila).